We begin with the raw amino-acid sequence, 518 residues long: Bifunctional purine biosynthesis protein PurH (518 aa).

The region spanning 1 to 144 (MNRRAVLSVS…KNQERVSIVV (144 aa)) is the MGS-like domain.

It belongs to the PurH family.

It catalyses the reaction (6R)-10-formyltetrahydrofolate + 5-amino-1-(5-phospho-beta-D-ribosyl)imidazole-4-carboxamide = 5-formamido-1-(5-phospho-D-ribosyl)imidazole-4-carboxamide + (6S)-5,6,7,8-tetrahydrofolate. It carries out the reaction IMP + H2O = 5-formamido-1-(5-phospho-D-ribosyl)imidazole-4-carboxamide. Its pathway is purine metabolism; IMP biosynthesis via de novo pathway; 5-formamido-1-(5-phospho-D-ribosyl)imidazole-4-carboxamide from 5-amino-1-(5-phospho-D-ribosyl)imidazole-4-carboxamide (10-formyl THF route): step 1/1. It functions in the pathway purine metabolism; IMP biosynthesis via de novo pathway; IMP from 5-formamido-1-(5-phospho-D-ribosyl)imidazole-4-carboxamide: step 1/1. This Desulfitobacterium hafniense (strain DSM 10664 / DCB-2) protein is Bifunctional purine biosynthesis protein PurH.